The following is a 433-amino-acid chain: Phosphoglycerate kinase, chloroplastic (433 aa).

The transit peptide at 1–28 (GASFSLHVLSKINSYKSQSTKPIRGVAS) directs the protein to the chloroplast. Residues A51, D52, N54, R68, S90, H91, G93, R94, R149, H181, and R182 each coordinate (2R)-3-phosphoglycerate. An ADP-binding site is contributed by G227. Residue G227 participates in CDP binding. AMP contacts are provided by K229 and K233. Residue K233 coordinates ATP. G251 contacts ADP. G251 provides a ligand contact to CDP. Residues G252 and G324 each coordinate AMP. ATP-binding residues include G252 and G324. Residues G349 and F354 each contribute to the CDP site. F354 serves as a coordination point for ADP. E355 lines the AMP pocket. ATP-binding residues include E355, D386, and S387. D386 contributes to the Mg(2+) binding site.

This sequence belongs to the phosphoglycerate kinase family. As to quaternary structure, monomer. Requires Mg(2+) as cofactor.

The protein localises to the plastid. It localises to the chloroplast. It catalyses the reaction (2R)-3-phosphoglycerate + ATP = (2R)-3-phospho-glyceroyl phosphate + ADP. It participates in carbohydrate biosynthesis; Calvin cycle. The chain is Phosphoglycerate kinase, chloroplastic from Spinacia oleracea (Spinach).